Here is a 130-residue protein sequence, read N- to C-terminus: Small ribosomal subunit protein uS9 (130 aa).

It belongs to the universal ribosomal protein uS9 family.

In Pseudomonas putida (strain ATCC 700007 / DSM 6899 / JCM 31910 / BCRC 17059 / LMG 24140 / F1), this protein is Small ribosomal subunit protein uS9.